The chain runs to 398 residues: Acetate kinase (398 aa).

Asn7 provides a ligand contact to Mg(2+). Lys14 serves as a coordination point for ATP. Arg85 is a binding site for substrate. Catalysis depends on Asp142, which acts as the Proton donor/acceptor. ATP-binding positions include 202–206, 277–279, and 325–329; these read HLGNG, DMR, and GIGEN. Residue Glu379 participates in Mg(2+) binding.

The protein belongs to the acetokinase family. Homodimer. The cofactor is Mg(2+). It depends on Mn(2+) as a cofactor.

It is found in the cytoplasm. It catalyses the reaction acetate + ATP = acetyl phosphate + ADP. It functions in the pathway metabolic intermediate biosynthesis; acetyl-CoA biosynthesis; acetyl-CoA from acetate: step 1/2. In terms of biological role, catalyzes the formation of acetyl phosphate from acetate and ATP. Can also catalyze the reverse reaction. The protein is Acetate kinase of Deinococcus radiodurans (strain ATCC 13939 / DSM 20539 / JCM 16871 / CCUG 27074 / LMG 4051 / NBRC 15346 / NCIMB 9279 / VKM B-1422 / R1).